The primary structure comprises 351 residues: Peptide chain release factor 1 (351 aa).

Residue Gln-229 is modified to N5-methylglutamine.

It belongs to the prokaryotic/mitochondrial release factor family. Post-translationally, methylated by PrmC. Methylation increases the termination efficiency of RF1.

The protein resides in the cytoplasm. Functionally, peptide chain release factor 1 directs the termination of translation in response to the peptide chain termination codons UAG and UAA. The polypeptide is Peptide chain release factor 1 (Dinoroseobacter shibae (strain DSM 16493 / NCIMB 14021 / DFL 12)).